A 116-amino-acid polypeptide reads, in one-letter code: U11-theraphotoxin-Hhn1b (116 aa).

A signal peptide spans 1-21 (MNTVRVTFLLVFVLAVSLGQA). Positions 22–74 (DKDENRMEMQEKTEQGKSYLDFAENLLLQKLEELEAKLLEEDSEESRNSRQKR) are excised as a propeptide. Residues 60–69 (LEEDSEESRN) are compositionally biased toward basic and acidic residues. The segment at 60-83 (LEEDSEESRNSRQKRCIGEGVPCD) is disordered. Cystine bridges form between C75-C90, C82-C95, and C89-C110.

This sequence belongs to the neurotoxin 14 (magi-1) family. 01 (HNTX-16) subfamily. As to expression, expressed by the venom gland.

The protein localises to the secreted. Probable ion channel inhibitor. This Cyriopagopus hainanus (Chinese bird spider) protein is U11-theraphotoxin-Hhn1b.